Here is a 338-residue protein sequence, read N- to C-terminus: Glycerol-3-phosphate dehydrogenase [NAD(P)+] (338 aa).

Positions 13, 14, and 108 each coordinate NADPH. Sn-glycerol 3-phosphate contacts are provided by lysine 108, glycine 139, and serine 141. Alanine 143 contributes to the NADPH binding site. Residues lysine 194, aspartate 247, serine 257, arginine 258, and asparagine 259 each contribute to the sn-glycerol 3-phosphate site. Catalysis depends on lysine 194, which acts as the Proton acceptor. Arginine 258 lines the NADPH pocket. NADPH is bound by residues valine 282 and glutamate 284.

The protein belongs to the NAD-dependent glycerol-3-phosphate dehydrogenase family.

Its subcellular location is the cytoplasm. The enzyme catalyses sn-glycerol 3-phosphate + NAD(+) = dihydroxyacetone phosphate + NADH + H(+). It catalyses the reaction sn-glycerol 3-phosphate + NADP(+) = dihydroxyacetone phosphate + NADPH + H(+). Its pathway is membrane lipid metabolism; glycerophospholipid metabolism. Functionally, catalyzes the reduction of the glycolytic intermediate dihydroxyacetone phosphate (DHAP) to sn-glycerol 3-phosphate (G3P), the key precursor for phospholipid synthesis. The chain is Glycerol-3-phosphate dehydrogenase [NAD(P)+] from Streptococcus pneumoniae serotype 19F (strain G54).